We begin with the raw amino-acid sequence, 952 residues long: MPIVRWLLLKSAVRGSSLIGKAHPCLRSIAAHPRYLSNVYSPPAGVSRSLRINVMWKQSKLTPPRFVKIMNRRPLFTETSHACAKCQKTSQLLNKTPNREILPDNVVPLHYDLTVEPDFKTFKFEGSVKIELKINNPAIDTVTLNTVDTDIHSAKIGDVTSSEIISEEEQQVTTFAFPKGTMSSFKGNAFLDIKFTGILNDNMAGFYRAKYEDKLTGETKYMATTQMEPTDARRAFPCFDEPNLKASFAITLVSDPSLTHLSNMDVKNEYVKDGKKVTLFNTTPKMSTYLVAFIVAELKYVESKNFRIPVRVYATPGNEKHGQFAADLTAKTLAFFEKTFGIQYPLPKMDNVAVHEFSAGAMENWGLVTYRVVDLLLDKDNSTLDRIQRVAEVVQHELAHQWFGNLVTMDWWEGLWLNEGFATWMSWYSCNEFQPEWKVWEQYVTDTLQHALSLDSLRSSHPIEVPVKKADEINQIFDAISYSKGASLLRMISKWLGEETFIKGVSQYLNKFKYGNAKTEDLWDALADASGKDVRSVMNIWTKKVGFPVISVSEDGNGKITFRQNRYLSTADVKPDEDKTIYPVFLALKTKNGVDSSVVLSERSKTIELEDPTFFKVNSEQSGIYITSYTDERWAKLGQQADLLSVEDRVGLVADVKTLSASGYTSTTNFLNLVSKWNNEKSFVVWDQIINSISSMKSTWLFEPKETQDALDNFTKQLISGMTHHLGWEFKSSDSFSTQRLKVTMFGAACAARDADVEKAALKMFTDYCSGNKEAIPALIKPIVFNTVARVGGAENYEKVYKIYLDPISNDEKLAALRSLGRFKEPKLLERTLGYLFDGTVLNQDIYIPMQGMRAHQEGVEALWNWVKKNWDELVKRLPPGLSMLGSVVTLGTSGFTSMQKIDEIKKFFATKSTKGFDQSLAQSLDTITSKAQWVNRDRDVVNKYLKENGYY.

Residues 1–52 constitute a mitochondrion transit peptide; it reads MPIVRWLLLKSAVRGSSLIGKAHPCLRSIAAHPRYLSNVYSPPAGVSRSLRI. Substrate-binding positions include Glu-228 and 360-364; that span reads GAMEN. Asn-381 carries N-linked (GlcNAc...) asparagine glycosylation. His-396 is a Zn(2+) binding site. The Proton acceptor role is filled by Glu-397. Zn(2+) contacts are provided by His-400 and Glu-419. An N-linked (GlcNAc...) asparagine glycan is attached at Asn-713.

Belongs to the peptidase M1 family. Requires Zn(2+) as cofactor.

Its subcellular location is the periplasm. The protein resides in the cytoplasm. The protein localises to the mitochondrion. Its function is as follows. Involved in the cellular supply of leucine from externally offered leucine-containing dipeptide substrates. The sequence is that of Aminopeptidase 2, mitochondrial (APE2) from Saccharomyces cerevisiae (strain ATCC 204508 / S288c) (Baker's yeast).